The chain runs to 49 residues: TELSGAPLDLYQYRGQVLLIPQFTGLLYQKSQQEGDVVDGLPSHQFHQY.

The protein belongs to the glutathione peroxidase family.

The enzyme catalyses 2 glutathione + H2O2 = glutathione disulfide + 2 H2O. With respect to regulation, inhibited by Cu(2+), SDS and DTT. Activity is slightly increased by Fe(2+), Mn(2+), triton X-100 and EDTA. Functionally, glutathione peroxidase which may protect the cell from oxidative damage. The polypeptide is Glutathione peroxidase (Lactiplantibacillus plantarum (Lactobacillus plantarum)).